The chain runs to 433 residues: Epi-neemfruitin B synthase L1AT (433 aa).

Active-site proton acceptor residues include histidine 151 and aspartate 372.

This sequence belongs to the plant acyltransferase family. As to quaternary structure, monomer. In terms of tissue distribution, mainly expressed in petioles and, to a lower extent, in roots.

The enzyme catalyses (21S)-21-acetyl-1-hydroxy-apo-melianone + acetyl-CoA = epi-neemfruitin B + acetate + CoA + H(+). It functions in the pathway secondary metabolite biosynthesis; terpenoid biosynthesis. In terms of biological role, acetyltransferase involved in the biosynthesis of limonoids triterpene natural products such as azadirachtin, an antifeedant widely used as bioinsecticide, and possessing many medicinal applications including anti-tumoral, anti-malarial, anti-rheumatic, antibacterial, anti-inflammatory, anti-pyretic and diuretic effects. Catalyzes the formation of epi-neemfruitin B from (21S)-21-acetyl-1-hydroxy-apo-melianone. The polypeptide is Epi-neemfruitin B synthase L1AT (Melia azedarach (Chinaberry tree)).